Reading from the N-terminus, the 131-residue chain is Small ribosomal subunit protein uS11 (131 aa).

It belongs to the universal ribosomal protein uS11 family. As to quaternary structure, part of the 30S ribosomal subunit. Interacts with proteins S7 and S18. Binds to IF-3.

Located on the platform of the 30S subunit, it bridges several disparate RNA helices of the 16S rRNA. Forms part of the Shine-Dalgarno cleft in the 70S ribosome. In Endomicrobium trichonymphae, this protein is Small ribosomal subunit protein uS11.